Reading from the N-terminus, the 149-residue chain is Transcriptional repressor NrdR (149 aa).

A zinc finger lies at 3 to 34 (CPFCSATDTKVIDSRLVADGHQVRRRRECTEC). Residues 49 to 139 (PRVIKRDGTR…VYRAFEDVSQ (91 aa)) form the ATP-cone domain.

This sequence belongs to the NrdR family. Requires Zn(2+) as cofactor.

Negatively regulates transcription of bacterial ribonucleotide reductase nrd genes and operons by binding to NrdR-boxes. The protein is Transcriptional repressor NrdR of Shewanella frigidimarina (strain NCIMB 400).